A 501-amino-acid chain; its full sequence is Pentatricopeptide repeat-containing protein At4g16470 (501 aa).

PPR repeat units lie at residues 107–141 (EPET…GFAL), 142–172 (NEYL…LKIR), 173–207 (DLIP…RIVP), 208–242 (DQYT…CIKS), 243–273 (NIIV…LSTR), 274–308 (NVIT…GCRP), 309–344 (NPVT…GIEP), and 345–379 (EGQH…EHPP). Residues 380 to 455 (VWGSLLGACR…DPGYSQIELQ (76 aa)) form a type E motif region. The tract at residues 456 to 486 (GEVHRFMKDDTSHRLSEKIYKKVHEMTSFFM) is type E(+) motif.

The protein belongs to the PPR family. PCMP-E subfamily.

In Arabidopsis thaliana (Mouse-ear cress), this protein is Pentatricopeptide repeat-containing protein At4g16470 (PCMP-E12).